A 590-amino-acid polypeptide reads, in one-letter code: Enhancer of polycomb-like protein 1 (590 aa).

Disordered stretches follow at residues 302–335 and 471–497; these read DEDL…PVRS and TPPR…EPPV. The span at 475–488 shows a compositional bias: basic and acidic residues; sequence ELGEDRSDRWKYDS.

The protein belongs to the enhancer of polycomb family. In terms of assembly, component of the NuA4 histone acetyltransferase complex.

Its subcellular location is the nucleus. Component of the NuA4 histone acetyltransferase complex which is involved in transcriptional activation of selected genes principally by acetylation of nucleosomal histone H4 and H2A. The NuA4 complex is also involved in DNA repair. Involved in gene silencing by neighboring heterochromatin, blockage of the silencing spreading along the chromosome, and required for cell cycle progression through G2/M. The polypeptide is Enhancer of polycomb-like protein 1 (EPL1) (Gibberella zeae (strain ATCC MYA-4620 / CBS 123657 / FGSC 9075 / NRRL 31084 / PH-1) (Wheat head blight fungus)).